A 374-amino-acid chain; its full sequence is UDP-N-acetylglucosamine--N-acetylmuramyl-(pentapeptide) pyrophosphoryl-undecaprenol N-acetylglucosamine transferase (374 aa).

UDP-N-acetyl-alpha-D-glucosamine-binding positions include 10-12 (TGG), Asn-124, Arg-166, Ser-196, and Gln-294.

This sequence belongs to the glycosyltransferase 28 family. MurG subfamily.

The protein resides in the cell membrane. The enzyme catalyses di-trans,octa-cis-undecaprenyl diphospho-N-acetyl-alpha-D-muramoyl-L-alanyl-D-glutamyl-meso-2,6-diaminopimeloyl-D-alanyl-D-alanine + UDP-N-acetyl-alpha-D-glucosamine = di-trans,octa-cis-undecaprenyl diphospho-[N-acetyl-alpha-D-glucosaminyl-(1-&gt;4)]-N-acetyl-alpha-D-muramoyl-L-alanyl-D-glutamyl-meso-2,6-diaminopimeloyl-D-alanyl-D-alanine + UDP + H(+). The protein operates within cell wall biogenesis; peptidoglycan biosynthesis. In terms of biological role, cell wall formation. Catalyzes the transfer of a GlcNAc subunit on undecaprenyl-pyrophosphoryl-MurNAc-pentapeptide (lipid intermediate I) to form undecaprenyl-pyrophosphoryl-MurNAc-(pentapeptide)GlcNAc (lipid intermediate II). In Symbiobacterium thermophilum (strain DSM 24528 / JCM 14929 / IAM 14863 / T), this protein is UDP-N-acetylglucosamine--N-acetylmuramyl-(pentapeptide) pyrophosphoryl-undecaprenol N-acetylglucosamine transferase.